The chain runs to 236 residues: T-cell surface glycoprotein CD8 alpha chain (236 aa).

The first 26 residues, 1–26 (MASRVICFLSLNLLLLDVITRLQVSG), serve as a signal peptide directing secretion. The region spanning 27-130 (QLQLSPKKVD…ITSNSVMYFS (104 aa)) is the Ig-like V-type domain. Over 27–189 (QLQLSPKKVD…MGLGFACDIY (163 aa)) the chain is Extracellular. The cysteines at positions 47 and 119 are disulfide-linked. N-linked (GlcNAc...) asparagine glycosylation is present at Asn63. Thr144 is a glycosylation site (O-linked (GalNAc...) threonine; partial). 4 O-linked (GalNAc...) threonine glycosylation sites follow: Thr148, Thr152, Thr158, and Thr160. Residues 150 to 170 (APTPVPPPTGTPRPLRPEACR) form a disordered region. Residues 190–210 (IWAPLAGICAVLLLSLVITLI) form a helical membrane-spanning segment. A lipid anchor (S-palmitoyl cysteine) is attached at Cys211. Topologically, residues 211–236 (CCHRNRRRVCKCPRPLVKPRPSEKFV) are cytoplasmic.

As to quaternary structure, forms disulfide-linked heterodimers with CD8B at the cell surface. Also forms homodimers in several cell types including NK-cells or peripheral blood T-lymphocytes. Interacts with the MHC class I HLA-A/B2M dimer. Interacts with LCK in a zinc-dependent manner. Post-translationally, palmitoylated, but association with CD8B seems to be more important for the enrichment of CD8A in lipid rafts. O-glycosylated. In terms of processing, phosphorylated in cytotoxic T-lymphocytes (CTLs) following activation.

It localises to the cell membrane. In terms of biological role, integral membrane glycoprotein that plays an essential role in the immune response and serves multiple functions in responses against both external and internal offenses. In T-cells, functions primarily as a coreceptor for MHC class I molecule:peptide complex. The antigens presented by class I peptides are derived from cytosolic proteins while class II derived from extracellular proteins. Interacts simultaneously with the T-cell receptor (TCR) and the MHC class I proteins presented by antigen presenting cells (APCs). In turn, recruits the Src kinase LCK to the vicinity of the TCR-CD3 complex. LCK then initiates different intracellular signaling pathways by phosphorylating various substrates ultimately leading to lymphokine production, motility, adhesion and activation of cytotoxic T-lymphocytes (CTLs). This mechanism enables CTLs to recognize and eliminate infected cells and tumor cells. In NK-cells, the presence of CD8A homodimers at the cell surface provides a survival mechanism allowing conjugation and lysis of multiple target cells. CD8A homodimer molecules also promote the survival and differentiation of activated lymphocytes into memory CD8 T-cells. This Rattus norvegicus (Rat) protein is T-cell surface glycoprotein CD8 alpha chain (Cd8a).